We begin with the raw amino-acid sequence, 358 residues long: Protein RecA (358 aa).

ATP is bound at residue 78–85; that stretch reads GPESGGKT.

This sequence belongs to the RecA family.

The protein resides in the cytoplasm. Functionally, can catalyze the hydrolysis of ATP in the presence of single-stranded DNA, the ATP-dependent uptake of single-stranded DNA by duplex DNA, and the ATP-dependent hybridization of homologous single-stranded DNAs. It interacts with LexA causing its activation and leading to its autocatalytic cleavage. The polypeptide is Protein RecA (Deinococcus geothermalis (strain DSM 11300 / CIP 105573 / AG-3a)).